Consider the following 336-residue polypeptide: Ornithine carbamoyltransferase, catabolic (336 aa).

Carbamoyl phosphate is bound by residues 57–60, Gln-84, Arg-108, and 135–138; these read STRT and HPTQ. Residues Asn-169, Asp-233, and 237-238 each bind L-ornithine; that span reads SM. Carbamoyl phosphate is bound by residues 275–276 and Arg-322; that span reads CL.

The protein belongs to the aspartate/ornithine carbamoyltransferase superfamily. OTCase family.

The protein localises to the cytoplasm. The catalysed reaction is carbamoyl phosphate + L-ornithine = L-citrulline + phosphate + H(+). Its pathway is amino-acid degradation; L-arginine degradation via ADI pathway; carbamoyl phosphate from L-arginine: step 2/2. In terms of biological role, reversibly catalyzes the transfer of the carbamoyl group from carbamoyl phosphate (CP) to the N(epsilon) atom of ornithine (ORN) to produce L-citrulline. The polypeptide is Ornithine carbamoyltransferase, catabolic (Photobacterium profundum (strain SS9)).